Consider the following 53-residue polypeptide: Mannose/glucose-specific lectin alpha 2 chain (53 aa).

The protein belongs to the leguminous lectin family. In terms of assembly, tetramer of two alpha and two beta chains.

The chain is Mannose/glucose-specific lectin alpha 2 chain from Lathyrus ochrus (Cyprus-vetch).